The chain runs to 486 residues: Ribulose bisphosphate carboxylase large chain (486 aa).

2 residues coordinate substrate: Asn-125 and Thr-175. Residue Lys-177 is the Proton acceptor of the active site. Lys-179 serves as a coordination point for substrate. Mg(2+)-binding residues include Lys-203, Asp-205, and Glu-206. Residue Lys-203 is modified to N6-carboxylysine. His-295 serves as the catalytic Proton acceptor. Residues Arg-296, His-328, and Ser-380 each contribute to the substrate site.

The protein belongs to the RuBisCO large chain family. Type I subfamily. As to quaternary structure, heterohexadecamer of 8 large chains and 8 small chains. It depends on Mg(2+) as a cofactor.

It carries out the reaction 2 (2R)-3-phosphoglycerate + 2 H(+) = D-ribulose 1,5-bisphosphate + CO2 + H2O. The enzyme catalyses D-ribulose 1,5-bisphosphate + O2 = 2-phosphoglycolate + (2R)-3-phosphoglycerate + 2 H(+). Its function is as follows. RuBisCO catalyzes two reactions: the carboxylation of D-ribulose 1,5-bisphosphate, the primary event in carbon dioxide fixation, as well as the oxidative fragmentation of the pentose substrate. Both reactions occur simultaneously and in competition at the same active site. The protein is Ribulose bisphosphate carboxylase large chain of Afipia carboxidovorans (strain ATCC 49405 / DSM 1227 / KCTC 32145 / OM5) (Oligotropha carboxidovorans).